Here is a 514-residue protein sequence, read N- to C-terminus: Deoxynucleoside triphosphate triphosphohydrolase SAMHD1 homolog (514 aa).

Residues 1-24 are disordered; it reads MNNTFKYVNEDVSGTEGEESDYDP. Lys80 contacts GTP. Asn83 lines the a 2'-deoxyribonucleoside 5'-triphosphate pocket. Residue 101 to 109 coordinates GTP; it reads DTEQFQRLR. Gln113 and Arg128 together coordinate substrate. The 132-residue stretch at 128–259 folds into the HD domain; sequence RFEHSIGVSH…SVDVDKFDYL (132 aa). 3 residues coordinate Zn(2+): His131, His170, and Asp171. His174 contacts substrate. His196 is an active-site residue. Substrate is bound by residues 252–258, Tyr258, and Asp262; that span reads DVDKFDY. Residue Asp254 participates in Zn(2+) binding. Residues Arg276, 291–293, and Asn297 contribute to the a 2'-deoxyribonucleoside 5'-triphosphate site; that span reads LSK. Residues Arg305 and 309–314 each bind substrate; that span reads HKLVYT. The a 2'-deoxyribonucleoside 5'-triphosphate site is built by His315 and Lys316. The GTP site is built by Arg380 and Lys384.

It belongs to the SAMHD1 family. In terms of assembly, homodimer; in absence of GTP and dNTP. Homotetramer; in GTP- and dNTP-bound form. Zn(2+) is required as a cofactor.

The catalysed reaction is a 2'-deoxyribonucleoside 5'-triphosphate + H2O = a 2'-deoxyribonucleoside + triphosphate + H(+). Its activity is regulated as follows. Allosterically activated and regulated via the combined actions of GTP and dNTPs (dATP, dGTP, dTTP and dCTP): Allosteric site 1 binds GTP, while allosteric site 2 binds dNTP. Allosteric activation promotes the formation of highly active homotetramers. Has deoxynucleoside triphosphate (dNTPase) activity. This Dictyostelium discoideum (Social amoeba) protein is Deoxynucleoside triphosphate triphosphohydrolase SAMHD1 homolog.